The primary structure comprises 155 residues: Ribosomal RNA large subunit methyltransferase H (155 aa).

S-adenosyl-L-methionine-binding positions include L72, G103, and 122 to 127 (LSPLTL).

Belongs to the RNA methyltransferase RlmH family. Homodimer.

Its subcellular location is the cytoplasm. The catalysed reaction is pseudouridine(1915) in 23S rRNA + S-adenosyl-L-methionine = N(3)-methylpseudouridine(1915) in 23S rRNA + S-adenosyl-L-homocysteine + H(+). Functionally, specifically methylates the pseudouridine at position 1915 (m3Psi1915) in 23S rRNA. The protein is Ribosomal RNA large subunit methyltransferase H of Histophilus somni (strain 2336) (Haemophilus somnus).